The chain runs to 451 residues: uncharacterized protein (451 aa).

2 disordered regions span residues 89-150 (PRLS…ISRY) and 164-222 (QVGE…KTFG). Residues 104–121 (QKPTISRESFVWESSASI) show a composition bias toward polar residues. The segment covering 137-147 (SSTPSIEPESI) has biased composition (low complexity). Basic and acidic residues predominate over residues 175-222 (RAADSENERRPSEVREAPESRRRRETSETGSDKSKAPPPIKEIKKTFG). The helical transmembrane segment at 358–376 (LIGLMLFQTTIFIISKIIA) threads the bilayer. The disordered stretch occupies residues 401–451 (RNGSSSGFASGTSSPLVFIPRTKRPSLVPSEKKMRGPSVTRDLAAEQERDA). Low complexity predominate over residues 403–414 (GSSSGFASGTSS).

The protein belongs to the IIV-6 067R family.

It localises to the membrane. This is an uncharacterized protein from Invertebrate iridescent virus 3 (IIV-3).